Reading from the N-terminus, the 54-residue chain is Lectin alpha-1 chain (54 aa).

It belongs to the leguminous lectin family. Tetramer of two alpha and two beta chains.

The chain is Lectin alpha-1 chain from Lathyrus cicera (Flat-pod pea).